The sequence spans 617 residues: ATP-dependent RNA helicase DBP1 (617 aa).

A disordered region spans residues 1–90 (MADLPQKVSN…TSANYNRGGS (90 aa)). The span at 7-17 (KVSNLSINNKE) shows a compositional bias: polar residues. Residues 38–58 (PSFERSTPKQEDKVTGGDFFR) are compositionally biased toward basic and acidic residues. Residues 79–90 (GGTSANYNRGGS) are compositionally biased toward polar residues. The Q motif motif lies at 154-182 (LDFSSPPLDELLMENIKLASFTKPTPVQK). Positions 185 to 374 (IPIVTKGRDL…RDFLDNYIFL (190 aa)) constitute a Helicase ATP-binding domain. 198-205 (AQTGSGKT) contributes to the ATP binding site. A DEAD box motif is present at residues 318–321 (DEAD). One can recognise a Helicase C-terminal domain in the interval 385–545 (NITQRILYVD…EVPTFLSDLS (161 aa)). Residues 542–617 (SDLSRQNSRG…GYGNSNASWW (76 aa)) are disordered. Residues 580–594 (FGSTRPRNTGTSNWG) are compositionally biased toward polar residues.

This sequence belongs to the DEAD box helicase family. DDX3/DED1 subfamily.

It is found in the cytoplasm. The enzyme catalyses ATP + H2O = ADP + phosphate + H(+). In terms of biological role, ATP-binding RNA helicase involved in translation initiation. Remodels RNA in response to ADP and ATP concentrations by facilitating disruption, but also formation of RNA duplexes. Redundant to DED1, may be required in conditions in which DED1 expression is decreased. This chain is ATP-dependent RNA helicase DBP1 (DBP1), found in Saccharomyces cerevisiae (strain ATCC 204508 / S288c) (Baker's yeast).